We begin with the raw amino-acid sequence, 376 residues long: WW domain-binding protein 4 (376 aa).

The Matrin-type zinc finger occupies 11–42; the sequence is KFCDYCKCWIADNRPSVEFHERGKNHKENVAR. Over residues 94–111 the composition is skewed to polar residues; that stretch reads PTVSPVISTVQPTPTSNQ. Disordered regions lie at residues 94-127 and 192-324; these read PTVSPVISTVQPTPTSNQQKEKKKKKKKKEASKG and WEKP…ECLS. The segment covering 114–123 has biased composition (basic residues); the sequence is EKKKKKKKKE. WW domains are found at residues 123–156 and 164–197; these read EASKGGWVEGVTADGHCYYYDLITGASQWEKPEG and TAAKAVWVEGLSEDGYTYYYNTETGESKWEKPED. The span at 219 to 272 shows a compositional bias: basic and acidic residues; sequence EDAKSSDSHSDSEGEQKKAGEASTETKKLIIKFKEKNKSTEKRIGPEIQKEKST. Residues S228 and S230 each carry the phosphoserine modification. An interaction with SNRNP200 region spans residues 357–375; the sequence is KKRRLENGKSRNLRQRGDD.

Component of the spliceosome B complex. Associated with U2 snRNPs. Binds splicing factors SNRPB, SNRPC and SF1. Interacts via the WW domains with the Pro-rich domains of KHDRBS1/SAM68. Interacts via the WW domains with the Pro-rich domains of WBP11. Interacts with SNRNP200.

It localises to the nucleus. It is found in the nucleus speckle. In terms of biological role, involved in pre-mRNA splicing as a component of the spliceosome. May play a role in cross-intron bridging of U1 and U2 snRNPs in the mammalian A complex. The sequence is that of WW domain-binding protein 4 (Wbp4) from Mus musculus (Mouse).